Reading from the N-terminus, the 219-residue chain is Probable cutinase 4 (219 aa).

The N-terminal stretch at 1–17 (MILPSLLVASLSALAAA) is a signal peptide. 2 cysteine pairs are disulfide-bonded: Cys41–Cys120 and Cys67–Cys81. An N-linked (GlcNAc...) asparagine glycan is attached at Asn99. The Nucleophile role is filled by Ser131. Cys182 and Cys189 are oxidised to a cystine. Asp186 is a catalytic residue. His199 functions as the Proton donor/acceptor in the catalytic mechanism.

This sequence belongs to the cutinase family.

Its subcellular location is the secreted. The catalysed reaction is cutin + H2O = cutin monomers.. Catalyzes the hydrolysis of complex carboxylic polyesters found in the cell wall of plants. Degrades cutin, a macromolecule that forms the structure of the plant cuticle. In Aspergillus terreus (strain NIH 2624 / FGSC A1156), this protein is Probable cutinase 4.